A 316-amino-acid chain; its full sequence is MLKTGKGTEQEVVQVHTRKSSRLFTFFNSQKVVPYVLISPFILSFIVLSFYPTVQAIVMSFQRVLPSEVTFVGLWNYSRILNPTFFTALQNTTTYMILTVVILVSIPMLFAVLLNSKVVKFRILFRTALFLPALTSVIVAGMVFRLMFSESDTAVANQILNWIGLESVEWRYNAWSGMFLMVVLASWRWMGINILYFLAALQNVPKELYEAADIDGANVVQKFFYVTLPFLKPVTIFVTTISVIGGFRMFEESFVFWEAGSPGNIGLTIVGYLYQEGIQQNDMGFGAAIGVVLMLIIFVISITQLYLTGAFKKGDQ.

The next 7 membrane-spanning stretches (helical) occupy residues 32–52 (VVPYVLISPFILSFIVLSFYP), 94–114 (TYMILTVVILVSIPMLFAVLL), 128–148 (ALFLPALTSVIVAGMVFRLMF), 178–198 (MFLMVVLASWRWMGINILYFL), 224–244 (FYVTLPFLKPVTIFVTTISVI), 254–274 (FVFWEAGSPGNIGLTIVGYLY), and 283–303 (MGFGAAIGVVLMLIIFVISIT). The ABC transmembrane type-1 domain maps to 89–304 (LQNTTTYMIL…LIIFVISITQ (216 aa)).

It belongs to the binding-protein-dependent transport system permease family. MalFG subfamily. As to quaternary structure, the complex is composed of two ATP-binding proteins (MsmX), two transmembrane proteins (AraP and AraQ) and a solute-binding protein (AraN).

Its subcellular location is the cell membrane. Its function is as follows. Part of the ABC transporter complex AraNPQ involved in the uptake of arabinooligosaccharides. Responsible for the translocation of the substrate across the membrane. The polypeptide is Arabinooligosaccharides transport system permease protein AraP (araP) (Halalkalibacterium halodurans (strain ATCC BAA-125 / DSM 18197 / FERM 7344 / JCM 9153 / C-125) (Bacillus halodurans)).